The chain runs to 374 residues: uncharacterized protein (374 aa).

The N-terminal stretch at Met1 to Pro23 is a signal peptide. Residues Ser66–Asn374 are disordered.

The protein resides in the secreted. This is an uncharacterized protein from Dictyostelium discoideum (Social amoeba).